The primary structure comprises 224 residues: Phosphoglycolate phosphatase (224 aa).

The active-site Nucleophile is D11. Positions 11, 13, and 177 each coordinate Mg(2+).

This sequence belongs to the HAD-like hydrolase superfamily. CbbY/CbbZ/Gph/YieH family. It depends on Mg(2+) as a cofactor.

The catalysed reaction is 2-phosphoglycolate + H2O = glycolate + phosphate. It participates in organic acid metabolism; glycolate biosynthesis; glycolate from 2-phosphoglycolate: step 1/1. In terms of biological role, specifically catalyzes the dephosphorylation of 2-phosphoglycolate. Is involved in the dissimilation of the intracellular 2-phosphoglycolate formed during the DNA repair of 3'-phosphoglycolate ends, a major class of DNA lesions induced by oxidative stress. The protein is Phosphoglycolate phosphatase of Haemophilus influenzae (strain 86-028NP).